A 351-amino-acid polypeptide reads, in one-letter code: Transaldolase (351 aa).

Lysine 138 acts as the Schiff-base intermediate with substrate in catalysis.

The protein belongs to the transaldolase family. Type 2 subfamily.

The protein localises to the cytoplasm. It catalyses the reaction D-sedoheptulose 7-phosphate + D-glyceraldehyde 3-phosphate = D-erythrose 4-phosphate + beta-D-fructose 6-phosphate. Its pathway is carbohydrate degradation; pentose phosphate pathway; D-glyceraldehyde 3-phosphate and beta-D-fructose 6-phosphate from D-ribose 5-phosphate and D-xylulose 5-phosphate (non-oxidative stage): step 2/3. Transaldolase is important for the balance of metabolites in the pentose-phosphate pathway. In Neisseria meningitidis serogroup A / serotype 4A (strain DSM 15465 / Z2491), this protein is Transaldolase (tal).